We begin with the raw amino-acid sequence, 248 residues long: Ribosomal RNA small subunit methyltransferase J (248 aa).

Residues 101–102 (RD), 117–118 (ER), 153–154 (SS), and Asp171 each bind S-adenosyl-L-methionine.

This sequence belongs to the methyltransferase superfamily. RsmJ family.

The protein resides in the cytoplasm. It carries out the reaction guanosine(1516) in 16S rRNA + S-adenosyl-L-methionine = N(2)-methylguanosine(1516) in 16S rRNA + S-adenosyl-L-homocysteine + H(+). In terms of biological role, specifically methylates the guanosine in position 1516 of 16S rRNA. The polypeptide is Ribosomal RNA small subunit methyltransferase J (Pectobacterium atrosepticum (strain SCRI 1043 / ATCC BAA-672) (Erwinia carotovora subsp. atroseptica)).